The primary structure comprises 671 residues: DNA ligase (671 aa).

Residues 36 to 40, 85 to 86, and E115 each bind NAD(+); these read DHVYD and SM. K117 functions as the N6-AMP-lysine intermediate in the catalytic mechanism. Positions 138, 172, 287, and 311 each coordinate NAD(+). Zn(2+) is bound by residues C405, C408, C423, and C428. The region spanning 588 to 671 is the BRCT domain; it reads AADNFFKGKT…SKIEEKDTEK (84 aa).

This sequence belongs to the NAD-dependent DNA ligase family. LigA subfamily. The cofactor is Mg(2+). It depends on Mn(2+) as a cofactor.

The enzyme catalyses NAD(+) + (deoxyribonucleotide)n-3'-hydroxyl + 5'-phospho-(deoxyribonucleotide)m = (deoxyribonucleotide)n+m + AMP + beta-nicotinamide D-nucleotide.. Functionally, DNA ligase that catalyzes the formation of phosphodiester linkages between 5'-phosphoryl and 3'-hydroxyl groups in double-stranded DNA using NAD as a coenzyme and as the energy source for the reaction. It is essential for DNA replication and repair of damaged DNA. In Lactobacillus delbrueckii subsp. bulgaricus (strain ATCC 11842 / DSM 20081 / BCRC 10696 / JCM 1002 / NBRC 13953 / NCIMB 11778 / NCTC 12712 / WDCM 00102 / Lb 14), this protein is DNA ligase.